A 243-amino-acid polypeptide reads, in one-letter code: NAD-dependent protein deacetylase (243 aa).

Residues 1-243 enclose the Deacetylase sirtuin-type domain; the sequence is MKHDLETLKH…VSVVKSLMTE (243 aa). Residues Ala-24, Phe-35, Arg-36, Gln-105, Ile-107, Asp-108, and His-123 each coordinate NAD(+). Phe-35 is a nicotinamide binding site. The nicotinamide site is built by Ile-107 and Asp-108. Residue His-123 is the Proton acceptor of the active site. Zn(2+) contacts are provided by Cys-131, Cys-134, Cys-151, and Cys-154. NAD(+) contacts are provided by Ser-192, Ser-193, Asn-215, and Asp-232.

Belongs to the sirtuin family. Class U subfamily. Zn(2+) serves as cofactor.

The protein localises to the cytoplasm. It catalyses the reaction N(6)-acetyl-L-lysyl-[protein] + NAD(+) + H2O = 2''-O-acetyl-ADP-D-ribose + nicotinamide + L-lysyl-[protein]. In terms of biological role, NAD-dependent protein deacetylase which modulates the activities of several enzymes which are inactive in their acetylated form. This chain is NAD-dependent protein deacetylase, found in Staphylococcus aureus (strain MRSA252).